The primary structure comprises 485 residues: NADH-quinone oxidoreductase subunit N (485 aa).

A run of 14 helical transmembrane segments spans residues 8–28 (LIAL…MLSI), 35–55 (FINT…LYFV), 75–95 (LYIG…YSWL), 104–124 (EFYL…CANH), 125–145 (LASL…LIGY), 159–179 (YMLL…LLYA), 203–223 (ILSG…LVPF), 235–255 (PAPV…AVVI), 271–291 (TVLT…ALTQ), 297–317 (LLGY…VAVQ), 326–346 (VGIY…VVSL), 383–403 (LAGI…VLGV), 406–426 (ELWW…YYYL), and 455–475 (MVVL…QPLI).

It belongs to the complex I subunit 2 family. In terms of assembly, NDH-1 is composed of 13 different subunits. Subunits NuoA, H, J, K, L, M, N constitute the membrane sector of the complex.

It localises to the cell inner membrane. It catalyses the reaction a quinone + NADH + 5 H(+)(in) = a quinol + NAD(+) + 4 H(+)(out). NDH-1 shuttles electrons from NADH, via FMN and iron-sulfur (Fe-S) centers, to quinones in the respiratory chain. The immediate electron acceptor for the enzyme in this species is believed to be ubiquinone. Couples the redox reaction to proton translocation (for every two electrons transferred, four hydrogen ions are translocated across the cytoplasmic membrane), and thus conserves the redox energy in a proton gradient. This Photorhabdus laumondii subsp. laumondii (strain DSM 15139 / CIP 105565 / TT01) (Photorhabdus luminescens subsp. laumondii) protein is NADH-quinone oxidoreductase subunit N.